Reading from the N-terminus, the 370-residue chain is N-acetyltaurine hydrolase (370 aa).

A divalent metal cation is bound by residues H26, H28, E189, H221, H250, and D318.

This sequence belongs to the metallo-dependent hydrolases superfamily. Phosphotriesterase family. Requires a divalent metal cation as cofactor.

It localises to the cytoplasm. The protein localises to the cytosol. The enzyme catalyses N-acetyltaurine + H2O = taurine + acetate. Its function is as follows. N-acetyltaurine hydrolase catalyzes the hydrolysis of N-acetyltaurine into taurine and acetate. This is N-acetyltaurine hydrolase (pter) from Dictyostelium discoideum (Social amoeba).